A 650-amino-acid polypeptide reads, in one-letter code: Threonine--tRNA ligase (650 aa).

One can recognise a TGS domain in the interval 1-66 (MVQITLPDGS…DQDAKLAIVT (66 aa)). A catalytic region spans residues 247-538 (DHRKIGRDLD…LIENHAGAMP (292 aa)). Residues Cys-338, His-389, and His-515 each coordinate Zn(2+).

The protein belongs to the class-II aminoacyl-tRNA synthetase family. Homodimer. Requires Zn(2+) as cofactor.

Its subcellular location is the cytoplasm. The enzyme catalyses tRNA(Thr) + L-threonine + ATP = L-threonyl-tRNA(Thr) + AMP + diphosphate + H(+). In terms of biological role, catalyzes the attachment of threonine to tRNA(Thr) in a two-step reaction: L-threonine is first activated by ATP to form Thr-AMP and then transferred to the acceptor end of tRNA(Thr). Also edits incorrectly charged L-seryl-tRNA(Thr). The polypeptide is Threonine--tRNA ligase (Bordetella avium (strain 197N)).